A 401-amino-acid chain; its full sequence is MSSFIKRFRKSTLVAFNRTVHFLQDDYSVWSYEIDADKESVPFEKGRPRKYFDADSDSDEEQQNGDEPGTGKNNGGGDTGKKDQDDQTNAIVALDVNEDRSLVAVATGDKSLYLFEVDQDGRTLKVLSRRLLSRASSCVKFAAGGRFAIVCDKGGDCYKYDCEEYRKPGRWLLGHMSQVLDVLIDTEEKLIITSDRDEKIRVTCHPDCHNIETFCLGHTEFVSHLEFLGPELLLSLSGDKTLRWWNYTSGKELARKELELPGNKLALQKLAADGTGLLAVLCYKPTAVNVFKLSGTTGCEFVQALNLKSGQVFSTIAFDESGNLLGFVIEESTGAPSLAKYEFDRENFKLAKEAAFIKSFDDSKLPYVDSVSFLFKKKFDNIKDYQERKRKRIEENNKQLG.

Residues 45–85 (KGRPRKYFDADSDSDEEQQNGDEPGTGKNNGGGDTGKKDQD) are disordered. Residues 54–64 (ADSDSDEEQQN) show a composition bias toward acidic residues. WD repeat units lie at residues 86–125 (DQTN…RTLK), 174–213 (GHMS…NIET), and 217–255 (GHTE…ELAR).

This sequence belongs to the WD repeat TRM82 family. In terms of assembly, forms a heterodimer with the catalytic subunit.

Its subcellular location is the nucleus. It participates in tRNA modification; N(7)-methylguanine-tRNA biosynthesis. Required for the formation of N(7)-methylguanine at position 46 (m7G46) in tRNA. In the complex, it is required to stabilize and induce conformational changes of the catalytic subunit. The sequence is that of tRNA (guanine-N(7)-)-methyltransferase non-catalytic subunit wuho from Culex quinquefasciatus (Southern house mosquito).